The following is a 437-amino-acid chain: tRNA-queuosine alpha-mannosyltransferase (437 aa).

Belongs to the glycosyltransferase group 1 family. Glycosyltransferase 4 subfamily.

Its subcellular location is the cytoplasm. It is found in the nucleus. It carries out the reaction queuosine(34) in tRNA(Asp) + GDP-alpha-D-mannose = O-4''-alpha-D-mannosylqueuosine(34) in tRNA(Asp) + GDP + H(+). Functionally, glycosyltransferase that specifically catalyzes mannosylation of cytoplasmic tRNA(Asp) modified with queuosine at position 34 (queuosine(34)). Mannosylates the cyclopentene moiety of queuosine(34) in tRNA(Asp) to form mannosyl-queuosine(34). Mannosylation of queuosine(34) in tRNA(Asp) is required to slow-down elongation at cognate codons, GAC and GAU, thereby regulating protein translation. The chain is tRNA-queuosine alpha-mannosyltransferase (gtdc1) from Xenopus laevis (African clawed frog).